The primary structure comprises 108 residues: Thiosulfate sulfurtransferase GlpE (108 aa).

Residues 17-105 (VSQSAILVDV…WLREFPQAIT (89 aa)) form the Rhodanese domain. The active-site Cysteine persulfide intermediate is the Cys-65.

The protein belongs to the GlpE family.

Its subcellular location is the cytoplasm. The enzyme catalyses thiosulfate + hydrogen cyanide = thiocyanate + sulfite + 2 H(+). It catalyses the reaction thiosulfate + [thioredoxin]-dithiol = [thioredoxin]-disulfide + hydrogen sulfide + sulfite + 2 H(+). In terms of biological role, transferase that catalyzes the transfer of sulfur from thiosulfate to thiophilic acceptors such as cyanide or dithiols. May function in a CysM-independent thiosulfate assimilation pathway by catalyzing the conversion of thiosulfate to sulfite, which can then be used for L-cysteine biosynthesis. The sequence is that of Thiosulfate sulfurtransferase GlpE from Proteus mirabilis (strain HI4320).